The primary structure comprises 318 residues: Epithelial-stromal interaction protein 1 (318 aa).

The tract at residues 1–60 (MNTRNRVVNSGLGASPASRPTRDPQDPSGRQGELSPVEDQREGLEAAPKGPSRESVVHAG) is disordered. Coiled-coil stretches lie at residues 73-188 (NINR…HQQY) and 240-280 (LKAE…HQTE).

Highly expressed in placenta, small intestine, spleen, kidney, thymus, liver, salivary gland and testes. Weakly expressed in breast, skeletal muscle and colon. Highly expressed in breast cancer upon interaction between tumor cells and stromal cells in vitro. Expressed in blood mononuclear cells from patients with systemic lupus erythematosus (SLE).

Plays a role in M1 macrophage polarization and is required for the proper regulation of gene expression during M1 versus M2 macrophage differentiation. Might play a role in RELA/p65 and STAT1 phosphorylation and nuclear localization upon activation of macrophages. The chain is Epithelial-stromal interaction protein 1 (EPSTI1) from Homo sapiens (Human).